Reading from the N-terminus, the 247-residue chain is Probable dihydroorotate dehydrogenase B (NAD(+)), electron transfer subunit (247 aa).

The 87-residue stretch at 1 to 87 folds into the FAD-binding FR-type domain; it reads MLRRVMIKET…RGPYGNGFKS (87 aa). [2Fe-2S] cluster contacts are provided by Cys200, Cys205, Cys208, and Cys216.

Belongs to the PyrK family. Heterotetramer of 2 PyrK and 2 PyrD type B subunits. Requires [2Fe-2S] cluster as cofactor. It depends on FAD as a cofactor.

The protein operates within pyrimidine metabolism; UMP biosynthesis via de novo pathway; orotate from (S)-dihydroorotate (NAD(+) route): step 1/1. Functionally, responsible for channeling the electrons from the oxidation of dihydroorotate from the FMN redox center in the PyrD type B subunit to the ultimate electron acceptor NAD(+). The polypeptide is Probable dihydroorotate dehydrogenase B (NAD(+)), electron transfer subunit (Pyrococcus abyssi (strain GE5 / Orsay)).